The chain runs to 494 residues: DEAD-box ATP-dependent RNA helicase CshA (494 aa).

Positions 3-31 (ITFQDFNLSSDLMKAINRMGFEEATPIQA) match the Q motif motif. Residues 34–204 (IPLGLSNKDV…ERFMTEPEHV (171 aa)) form the Helicase ATP-binding domain. 47 to 54 (AQTGTGKT) provides a ligand contact to ATP. The DEAD box signature appears at 152–155 (DEAD). A Helicase C-terminal domain is found at 215–375 (NIQQFYLEVQ…RMKEPTLDEA (161 aa)). The required for dimerization or oligomerization stretch occupies residues 413–494 (VTVVAAAIKM…SGDRRQKKSY (82 aa)). Residues 429–494 (DTPVRLTDEA…SGDRRQKKSY (66 aa)) form a disordered region. The segment covering 443–452 (KRYKNQRSSK) has biased composition (basic residues). Residues 473–488 (SYDKKRSNDRRSSGDR) are compositionally biased toward basic and acidic residues.

The protein belongs to the DEAD box helicase family. CshA subfamily. As to quaternary structure, homodimer or oligomer. May interact with RNA helicases CshB and DbpA (DeaD). Probably a component of the RNA degradosome complex composed of rny, rnjA, rnjB, pnp, pfkA and eno, and possibly also rnpA (although rnjA and rnjB's presence is unclear). Interacts with ribosomal proteins L1 and L3 (rplA and rplC) and the protein component of RNase RnpA. Interacts with the RNA polymerase core. Requires Mg(2+) as cofactor.

The protein resides in the cytoplasm. It is found in the nucleoid. The protein localises to the cell membrane. The enzyme catalyses ATP + H2O = ADP + phosphate + H(+). Its activity is regulated as follows. RNA helicase activity is inhibited by EDTA. Functionally, the most abundant DEAD-box RNA helicase. An ATP-dependent RNA helicase with RNA-dependent ATPase activity. May work in conjunction with the cold shock proteins to ensure proper initiation of transcription at low and optimal temperatures. In vitro, unwinds dsRNA in both 5'- and 3'- directions. Plays a role in ribosomal 50S subunit assembly. Its deletion leads to changes in mRNA levels for over 200 transcripts. This is DEAD-box ATP-dependent RNA helicase CshA from Bacillus subtilis (strain 168).